A 1464-amino-acid polypeptide reads, in one-letter code: Nuclear pore complex protein NUP155 (1464 aa).

Position 2 is an N-acetylserine (serine 2).

This sequence belongs to the non-repetitive/WGA-negative nucleoporin family. In terms of assembly, part of the nuclear pore complex (NPC). The NPC has an eight-fold symmetrical structure comprising a central transport channel and two rings, the cytoplasmic and nuclear rings, to which eight filaments are attached. The cytoplasmic filaments have loose ends, while the nuclear filaments are joined in a distal ring, forming a nuclear basket. NPCs are highly dynamic in configuration and composition, and can be devided in 3 subcomplexes, the NUP62 subcomplex, the NUP107-160 subcomplex and the NUP93 subcomplex, containing approximately 30 different nucleoporin proteins.

Its subcellular location is the nucleus. The protein resides in the nuclear pore complex. In terms of biological role, major component of the nuclear pore complex (NPC). The polypeptide is Nuclear pore complex protein NUP155 (Arabidopsis thaliana (Mouse-ear cress)).